The sequence spans 121 residues: Large ribosomal subunit protein eL18 (121 aa).

It belongs to the eukaryotic ribosomal protein eL18 family. Part of the 50S ribosomal subunit.

This chain is Large ribosomal subunit protein eL18, found in Thermococcus kodakarensis (strain ATCC BAA-918 / JCM 12380 / KOD1) (Pyrococcus kodakaraensis (strain KOD1)).